The chain runs to 101 residues: Interleukin-8 (101 aa).

A signal peptide spans 1–22; that stretch reads MTSKLAIALLAAFLLSAALCKA. Arginine 27 carries the citrulline modification. Cystine bridges form between cysteine 34/cysteine 61 and cysteine 36/cysteine 77.

This sequence belongs to the intercrine alpha (chemokine CxC) family. Homodimer. In terms of processing, citrullination at Arg-27 prevents proteolysis, and dampens tissue inflammation, it also enhances leukocytosis, possibly through impaired chemokine clearance from the blood circulation.

Its subcellular location is the secreted. Its function is as follows. Chemotactic factor that mediates inflammatory response by attracting neutrophils, basophils, and T-cells to clear pathogens and protect the host from infection. Also plays an important role in neutrophil activation. Released in response to an inflammatory stimulus, exerts its effect by binding to the G-protein-coupled receptors CXCR1 and CXCR2, primarily found in neutrophils, monocytes and endothelial cells. G-protein heterotrimer (alpha, beta, gamma subunits) constitutively binds to CXCR1/CXCR2 receptor and activation by IL8 leads to beta and gamma subunits release from Galpha (GNAI2 in neutrophils) and activation of several downstream signaling pathways including PI3K and MAPK pathways. The protein is Interleukin-8 (CXCL8) of Tursiops truncatus (Atlantic bottle-nosed dolphin).